Here is a 113-residue protein sequence, read N- to C-terminus: Prefoldin subunit beta (113 aa).

This sequence belongs to the prefoldin subunit beta family. Heterohexamer of two alpha and four beta subunits.

It is found in the cytoplasm. Its function is as follows. Molecular chaperone capable of stabilizing a range of proteins. Seems to fulfill an ATP-independent, HSP70-like function in archaeal de novo protein folding. The chain is Prefoldin subunit beta from Methanococcus maripaludis (strain DSM 14266 / JCM 13030 / NBRC 101832 / S2 / LL).